The chain runs to 125 residues: Snaclec VP12 subunit B (125 aa).

Intrachain disulfides connect C4-C15, C32-C121, and C98-C113. A C-type lectin domain is found at 11–122; it reads FEKYCYKVFQ…CNDPRYFVCK (112 aa).

Belongs to the snaclec family. As to quaternary structure, heterodimer of subunits alpha and beta; disulfide-linked. Expressed by the venom gland.

It localises to the secreted. In terms of biological role, inhibits integrin alpha-2/beta-1- (ITGA2/ITGB1) dependent melanoma metastasis. This is Snaclec VP12 subunit B from Daboia palaestinae (Palestine viper).